The primary structure comprises 378 residues: Vacuolar membrane protein CAGL0J10076g (378 aa).

The segment at 18–70 (RGLPRLVTTSTTPTPTTEPTTEPTTTKDETSQTSATDASTATTSTAATSTAAT) is disordered. Low complexity-rich tracts occupy residues 25-41 (TTST…TEPT) and 48-70 (SQTS…TAAT). Residues 118–138 (FIAVGSIAGAILMLIFLWWSI) traverse the membrane as a helical segment. The segment at 299–368 (NDYDTPLIPD…ARDHRKTPSM (70 aa)) is disordered. Basic residues predominate over residues 321–337 (RSHRKTPSNDKYHRRNR). The span at 343-356 (SPSRSPTRTPIRTR) shows a compositional bias: low complexity.

This sequence belongs to the PRM5 family.

It is found in the vacuole membrane. The chain is Vacuolar membrane protein CAGL0J10076g from Candida glabrata (strain ATCC 2001 / BCRC 20586 / JCM 3761 / NBRC 0622 / NRRL Y-65 / CBS 138) (Yeast).